The chain runs to 539 residues: Protein peanut (539 aa).

A phosphoserine mark is found at Ser-6 and Ser-13. Residues 29–90 (LRDKQQAASA…GASNGDSNKL (62 aa)) form a disordered region. Residues 35–54 (AASASASSATNGSSGSESLV) show a composition bias toward low complexity. Positions 139 to 411 (RGFEFTLMVV…ENYRCRKLSE (273 aa)) constitute a Septin-type G domain. The G1 motif stretch occupies residues 149 to 156 (GASGLGKS). GTP is bound by residues 149 to 156 (GASGLGKS), Thr-183, Gly-209, 288 to 296 (KADTMTPDE), Gly-345, and Arg-360. The G3 motif stretch occupies residues 206-209 (DTPG). Residues 287-290 (AKAD) form a G4 motif region. A coiled-coil region spans residues 420–516 (RLSNKNPLTQ…HVTLEELKRR (97 aa)). A disordered region spans residues 513–539 (LKRRSLGANSSTDNVDGKKEKKKKGLF). Residue Ser-517 is modified to Phosphoserine.

Belongs to the TRAFAC class TrmE-Era-EngA-EngB-Septin-like GTPase superfamily. Septin GTPase family. As to quaternary structure, likely part of a multicomponent septin complex that includes Septin1. Interacts with Septin1. Interacts with hil. Interacts with park. In terms of processing, ubiquitinated by park, leading to its degradation by the proteasome. In terms of tissue distribution, accumulates at the leading edge of the cleavage furrow in dividing cells and cellularizing embryos (at protein level).

The protein localises to the apical cell membrane. It is found in the cleavage furrow. It localises to the cytoplasm. The protein resides in the cell cortex. In terms of biological role, involved in cytokinesis and possibly cellularization. Also acts as an enhancer of the sina gene, thus having a role in photoreceptor development. May be involved in p53-dependent apoptosis. The protein is Protein peanut (pnut) of Drosophila melanogaster (Fruit fly).